The chain runs to 67 residues: Gallinacin-6 (67 aa).

The signal sequence occupies residues 1-19 (MRILYLLLSVLFVVLQGVA). A propeptide spanning residues 20-25 (GQPYFS) is cleaved from the precursor. Disulfide bonds link Cys31-Cys60, Cys38-Cys53, and Cys43-Cys61.

The protein belongs to the beta-defensin family. In terms of tissue distribution, expressed in bone marrow, testis, ovary, lung and trachea. Expressed in the ovarian stroma, but not in the ovarian follicles.

Its subcellular location is the secreted. The protein resides in the cytoplasmic granule. Has bactericidal activity. Potent activity against S.typhimurium and S.entiriditis. In Gallus gallus (Chicken), this protein is Gallinacin-6 (GAL6).